Here is a 374-residue protein sequence, read N- to C-terminus: 2,7-anhydro-N-acetylneuraminate hydratase (374 aa).

The NAD(+) site is built by tyrosine 13, phenylalanine 14, aspartate 35, asparagine 38, threonine 70, asparagine 72, histidine 75, glutamate 92, lysine 93, tryptophan 162, and lysine 163.

Belongs to the Gfo/Idh/MocA family. As to quaternary structure, homodimer. It depends on NAD(+) as a cofactor.

The enzyme catalyses N-acetyl-2,7-anhydro-alpha-neuraminate + H2O = N-acetyl-alpha-neuraminate. Neu5Ac is produced in the presence of NAD(+) or NADH, but not in the presence of FAD. Functionally, hydratase involved in the degradation of sialic acids, which are present in the host mucus layer and represent a much-coveted source of nutrients for R.gnavus, a prevalent member of the normal gut microbiota. Catalyzes the reversible conversion of the dehydrated form of N-acetylneuraminate (Neu5Ac), 2,7-anhydro-N-acetylneuraminate (2,7-AN), to Neu5Ac, allowing growth on 2,7-AN produced by the IT-sialidase NanH. Acts through a multistep mechanism involving a keto intermediate and cycling of NADH/NAD(+). The polypeptide is 2,7-anhydro-N-acetylneuraminate hydratase (Mediterraneibacter gnavus (strain ATCC 29149 / DSM 114966 / JCM 6515 / VPI C7-9) (Ruminococcus gnavus)).